Here is a 122-residue protein sequence, read N- to C-terminus: Large ribosomal subunit protein uL22 (122 aa).

Residues 102 to 122 (VAEGKEMKSSKSHKKNQAEGK) form a disordered region.

The protein belongs to the universal ribosomal protein uL22 family. In terms of assembly, part of the 50S ribosomal subunit.

Its function is as follows. This protein binds specifically to 23S rRNA; its binding is stimulated by other ribosomal proteins, e.g. L4, L17, and L20. It is important during the early stages of 50S assembly. It makes multiple contacts with different domains of the 23S rRNA in the assembled 50S subunit and ribosome. Functionally, the globular domain of the protein is located near the polypeptide exit tunnel on the outside of the subunit, while an extended beta-hairpin is found that lines the wall of the exit tunnel in the center of the 70S ribosome. This is Large ribosomal subunit protein uL22 from Helicobacter pylori (strain ATCC 700392 / 26695) (Campylobacter pylori).